The sequence spans 206 residues: Small ribosomal subunit protein eS8 (206 aa).

Positions 1-37 (MGISRDSRHKRSATGAKRAQFRKKRKFELGRQPANTK) are disordered.

This sequence belongs to the eukaryotic ribosomal protein eS8 family. Component of the small ribosomal subunit. Mature ribosomes consist of a small (40S) and a large (60S) subunit. The 40S subunit contains about 32 different proteins and 1 molecule of RNA (18S). The 60S subunit contains 45 different proteins and 3 molecules of RNA (25S, 5.8S and 5S).

Its subcellular location is the cytoplasm. Component of the ribosome, a large ribonucleoprotein complex responsible for the synthesis of proteins in the cell. The small ribosomal subunit (SSU) binds messenger RNAs (mRNAs) and translates the encoded message by selecting cognate aminoacyl-transfer RNA (tRNA) molecules. The large subunit (LSU) contains the ribosomal catalytic site termed the peptidyl transferase center (PTC), which catalyzes the formation of peptide bonds, thereby polymerizing the amino acids delivered by tRNAs into a polypeptide chain. The nascent polypeptides leave the ribosome through a tunnel in the LSU and interact with protein factors that function in enzymatic processing, targeting, and the membrane insertion of nascent chains at the exit of the ribosomal tunnel. The sequence is that of Small ribosomal subunit protein eS8 (RPS8A) from Candida albicans (strain SC5314 / ATCC MYA-2876) (Yeast).